Reading from the N-terminus, the 95-residue chain is Pyrimidine/purine nucleoside phosphorylase (95 aa).

The protein belongs to the nucleoside phosphorylase PpnP family.

It catalyses the reaction a purine D-ribonucleoside + phosphate = a purine nucleobase + alpha-D-ribose 1-phosphate. It carries out the reaction adenosine + phosphate = alpha-D-ribose 1-phosphate + adenine. The enzyme catalyses cytidine + phosphate = cytosine + alpha-D-ribose 1-phosphate. The catalysed reaction is guanosine + phosphate = alpha-D-ribose 1-phosphate + guanine. It catalyses the reaction inosine + phosphate = alpha-D-ribose 1-phosphate + hypoxanthine. It carries out the reaction thymidine + phosphate = 2-deoxy-alpha-D-ribose 1-phosphate + thymine. The enzyme catalyses uridine + phosphate = alpha-D-ribose 1-phosphate + uracil. The catalysed reaction is xanthosine + phosphate = alpha-D-ribose 1-phosphate + xanthine. Catalyzes the phosphorolysis of diverse nucleosides, yielding D-ribose 1-phosphate and the respective free bases. Can use uridine, adenosine, guanosine, cytidine, thymidine, inosine and xanthosine as substrates. Also catalyzes the reverse reactions. The protein is Pyrimidine/purine nucleoside phosphorylase of Yersinia pestis bv. Antiqua (strain Antiqua).